Here is a 471-residue protein sequence, read N- to C-terminus: 3-isopropylmalate dehydratase large subunit (471 aa).

Residues Cys-347, Cys-407, and Cys-410 each contribute to the [4Fe-4S] cluster site.

It belongs to the aconitase/IPM isomerase family. LeuC type 1 subfamily. As to quaternary structure, heterodimer of LeuC and LeuD. [4Fe-4S] cluster is required as a cofactor.

The enzyme catalyses (2R,3S)-3-isopropylmalate = (2S)-2-isopropylmalate. It participates in amino-acid biosynthesis; L-leucine biosynthesis; L-leucine from 3-methyl-2-oxobutanoate: step 2/4. In terms of biological role, catalyzes the isomerization between 2-isopropylmalate and 3-isopropylmalate, via the formation of 2-isopropylmaleate. This is 3-isopropylmalate dehydratase large subunit from Prochlorococcus marinus (strain MIT 9211).